A 418-amino-acid polypeptide reads, in one-letter code: Probable aminotransferase Rv1178 (418 aa).

Residues 22-42 form a disordered region; that stretch reads GQGWHDRERPASGQGSGAAER.

This sequence belongs to the class-I pyridoxal-phosphate-dependent aminotransferase family. Pyridoxal 5'-phosphate serves as cofactor.

In Mycobacterium tuberculosis (strain ATCC 25618 / H37Rv), this protein is Probable aminotransferase Rv1178.